The primary structure comprises 731 residues: Auxin response factor 3 (731 aa).

The segment covering M1–S22 has biased composition (low complexity). The disordered stretch occupies residues M1 to C41. The TF-B3 DNA-binding region spans F191–T293.

Belongs to the ARF family. As to quaternary structure, homo and heterodimers. In terms of tissue distribution, expressed in roots, culms, leaves and young panicles.

Its subcellular location is the nucleus. In terms of biological role, auxin response factors (ARFs) are transcriptional factors that bind specifically to the DNA sequence 5'-TGTCTC-3' found in the auxin-responsive promoter elements (AuxREs). The protein is Auxin response factor 3 (ARF3) of Oryza sativa subsp. japonica (Rice).